Consider the following 315-residue polypeptide: Taste receptor type 2 member 3 (315 aa).

Over 1–5 (MGLTE) the chain is Extracellular. The helical transmembrane segment at 6-26 (GLFLILSGTQFALGILVNCFI) threads the bilayer. Residues 27–41 (GLVNGSSWFKTKRMS) lie on the Cytoplasmic side of the membrane. A helical membrane pass occupies residues 42 to 62 (LSDFIITTLAFLRIILLCIIL). Residues 63 to 93 (TDSFLIEFSPNAHDSGVIMQIIDVSWTFTNH) are Extracellular-facing. A helical transmembrane segment spans residues 94–114 (LSIWLATCLGVLYCLKIASFS). The Cytoplasmic portion of the chain corresponds to 115–127 (HPTFLWLKWRVSR). A helical transmembrane segment spans residues 128-148 (VMVWMLLGVLLLSCGSTASLI). Residues 149–185 (NEFKLYSVFRGIEATXNVTEHFRKKRSEYYLIHVLGT) are Extracellular-facing. Residue N165 is glycosylated (N-linked (GlcNAc...) asparagine). Residues 186 to 206 (LWYLPPLIVSLAAYFLLIFSL) traverse the membrane as a helical segment. Topologically, residues 207–233 (GRHTRQMLQNGTSSRDPSTEAHKRAIR) are cytoplasmic. The helical transmembrane segment at 234 to 254 (IILSSFFLFLLYFLAFLIASF) threads the bilayer. Topologically, residues 255–265 (GNFLPKTKMAK) are extracellular. The helical transmembrane segment at 266-286 (MIGEVMTMFYPAGHSFILILG) threads the bilayer. Topologically, residues 287-315 (NSKLKQTFVEMLRCESGHLKPGSKGPIFS) are cytoplasmic.

The protein belongs to the G-protein coupled receptor T2R family.

It is found in the membrane. In terms of biological role, gustducin-coupled receptor implicated in the perception of bitter compounds in the oral cavity and the gastrointestinal tract. Signals through PLCB2 and the calcium-regulated cation channel TRPM5. The chain is Taste receptor type 2 member 3 (TAS2R3) from Pongo pygmaeus (Bornean orangutan).